Reading from the N-terminus, the 306-residue chain is D-alanine--D-alanine ligase (306 aa).

Residues 100–295 enclose the ATP-grasp domain; it reads KQIFRRAGLP…FGQLLERLME (196 aa). ATP is bound at residue 127 to 180; the sequence is RLPYPLFVKSNTGGSSLRLGRARNRAELDDIMGQIFAAGEEVIMEPVLPGREVT. Residues aspartate 249, glutamate 262, and asparagine 264 each contribute to the Mg(2+) site.

This sequence belongs to the D-alanine--D-alanine ligase family. Mg(2+) is required as a cofactor. Mn(2+) serves as cofactor.

It localises to the cytoplasm. The enzyme catalyses 2 D-alanine + ATP = D-alanyl-D-alanine + ADP + phosphate + H(+). Its pathway is cell wall biogenesis; peptidoglycan biosynthesis. Its function is as follows. Cell wall formation. This Desulfovibrio desulfuricans (strain ATCC 27774 / DSM 6949 / MB) protein is D-alanine--D-alanine ligase.